Consider the following 159-residue polypeptide: Protein Smg homolog (159 aa).

Belongs to the Smg family.

The protein is Protein Smg homolog of Dichelobacter nodosus (strain VCS1703A).